Consider the following 490-residue polypeptide: Beta-glucosidase 42 (490 aa).

A beta-D-glucoside contacts are provided by residues Gln35, His137, Asn182–Glu183, Tyr317, and Glu388. Glu183 functions as the Proton donor in the catalytic mechanism. Catalysis depends on Glu388, which acts as the Nucleophile. An N-linked (GlcNAc...) asparagine glycan is attached at Asn420. Residues Trp437, Glu444–Trp445, and Phe453 each bind a beta-D-glucoside.

Belongs to the glycosyl hydrolase 1 family. In terms of tissue distribution, expressed at low levels predominantly in root epidermal cells.

The catalysed reaction is Hydrolysis of terminal, non-reducing beta-D-glucosyl residues with release of beta-D-glucose.. Glucosidase that hydrolyzes scopolin and various beta-glucosides, cellooligosaccharides (mainly cellotriose) and laminarioligosaccharides. Can use p-nitrophenyl-beta-glucosides (pNP beta-Glc) and p-nitrophenyl-beta-D-fucosides (pNP beta-D-Fuc) as substrates, and, to a lower extent, beta-galactosides, beta-mannosides and beta-xylosides. Involved in the secretion of root-derived phenolics upon iron ions (Fe) depletion. Promotes disease resistance toward B.cinerea, H.arabidopsidis and P.syringae pv. tomato DC3000. Required during rhizobacteria-mediated (e.g. P.fluorescens WCS417r) broad-spectrum induced systemic resistance (ISR) against several pathogens. The polypeptide is Beta-glucosidase 42 (Arabidopsis thaliana (Mouse-ear cress)).